A 129-amino-acid polypeptide reads, in one-letter code: DNA-directed RNA polymerase III subunit rpc9 (129 aa).

The protein belongs to the eukaryotic RPC9 RNA polymerase subunit family. Component of the RNA polymerase III (Pol III) complex.

The protein resides in the cytoplasm. The protein localises to the nucleus. DNA-dependent RNA polymerase catalyzes the transcription of DNA into RNA using the four ribonucleoside triphosphates as substrates. Specific peripheric component of RNA polymerase III which synthesizes small RNAs, such as 5S rRNA and tRNAs. This chain is DNA-directed RNA polymerase III subunit rpc9 (rpc17), found in Schizosaccharomyces pombe (strain 972 / ATCC 24843) (Fission yeast).